We begin with the raw amino-acid sequence, 330 residues long: Probable L-asparaginase (330 aa).

The 325-residue stretch at 6-330 (PTIALLATGG…EKIQEMFEEY (325 aa)) folds into the Asparaginase/glutaminase domain. Residue T16 is the O-isoaspartyl threonine intermediate of the active site. Residues S62 and 95-96 (TD) contribute to the substrate site.

It belongs to the asparaginase 1 family.

It is found in the cytoplasm. It carries out the reaction L-asparagine + H2O = L-aspartate + NH4(+). The polypeptide is Probable L-asparaginase (ansA) (Helicobacter pylori (strain ATCC 700392 / 26695) (Campylobacter pylori)).